Reading from the N-terminus, the 336-residue chain is PHD finger protein 11 (336 aa).

Residues 1 to 20 (MAEETAPPCGPVSTGGSLSP) are disordered. The C2HC pre-PHD-type zinc-finger motif lies at 25 to 61 (KRTCALCPDGHEWSVIYFAPSANIAAHENCLLYSSGL). A PHD-type zinc finger spans residues 91–143 (LKCSLCNKGGATVGCDLSSCRKSYHYVCAKKDHAIPQVDEDLGTYKIFCPEHP). 2 disordered regions span residues 139 to 179 (CPEH…KKMK) and 303 to 336 (DPSGSTSGSLLPPEDHQCRCQESPEVQAGSGDSL). Over residues 303–314 (DPSGSTSGSLLP) the composition is skewed to low complexity.

Interacts with BRCA1 and RELA.

It is found in the nucleus. Functionally, positive regulator of Th1-type cytokine gene expression. This is PHD finger protein 11 (Phf11) from Rattus norvegicus (Rat).